A 410-amino-acid chain; its full sequence is MADAPKEGRLTRFLDFTQLTDMASESVGGKILFATDDFFAPAENLIKSDSPCFKEREYTEFGKWMDGWETRRKRIPGHDWCVLRLGIQGVIRAFDVDVSYFTGDYAPRMSIQAANLEEEKLPEIPERGIRTGAAATPEEFEAIAELKSDDWSYLVPMTELKPGNPASGHNYFLVNSQQRWTHIRLNIFPDGGIARLRVLGTGQKDWTATDPKEHADLVAIAFGGVCVGFSSAKFGHPNNIIGVGGAKSMADGWETARRLDRPPILENDDNGILLVPGCEWAVFRLAHPGVITRIEIDTKYFKGNAPDSCKVDGCVLTTQEEEDMIKQKWILPAHKWKPLLPVTKLSPNQSHLFDSLTLELQDVITHARLTIVPDGGVSRLRLRGFPSSICLLRPREKPMMKFSVGFKANP.

Belongs to the allantoicase family.

In terms of biological role, the function of this enzyme is unclear as allantoicase activity is not known to exist in mammals. The sequence is that of Probable inactive allantoicase (ALLC) from Macaca fascicularis (Crab-eating macaque).